We begin with the raw amino-acid sequence, 195 residues long: CASP-like protein IN26 (195 aa).

At 1–26 (VAPTGSVETEKAGPSYKPKEYYKVTE) the chain is on the cytoplasmic side. Residues 27 to 47 (AILRLLLLASLVVAVVVMVTS) form a helical membrane-spanning segment. Residues 48–75 (KETELISVKLDPFPPFMLPLTAKFTQSP) are Extracellular-facing. The helical transmembrane segment at 76 to 96 (AFIYFVAGLSVAGLYTIISTL) threads the bilayer. The Cytoplasmic segment spans residues 97-120 (ASFYNLLIKPGFCPALVSHFIILD). Residues 121–143 (VVMLGIVGTATGAAGGVAYIGLK) form a helical membrane-spanning segment. The Extracellular portion of the chain corresponds to 144 to 163 (GNSHVGWTKVCNKYGKLCTH). The helical transmembrane segment at 164–184 (LGASLAVSFFAFIVLLLLIIL) threads the bilayer. Residues 185–195 (SIHSLSKKIPK) lie on the Cytoplasmic side of the membrane.

This sequence belongs to the Casparian strip membrane proteins (CASP) family. In terms of assembly, homodimer and heterodimers.

It is found in the cell membrane. This Ipomoea nil (Japanese morning glory) protein is CASP-like protein IN26 (IN26).